The following is a 276-amino-acid chain: Undecaprenyl-diphosphatase (276 aa).

Helical transmembrane passes span 42-62, 88-108, 116-136, 149-169, 187-207, 222-242, and 253-273; these read AVTA…IVYF, ALLG…GYLG, LRSL…IVYA, MRLP…VPGV, VAAT…AGIF, SLVV…AWLL, and FVWY…TGLV.

This sequence belongs to the UppP family.

It localises to the cell membrane. It catalyses the reaction di-trans,octa-cis-undecaprenyl diphosphate + H2O = di-trans,octa-cis-undecaprenyl phosphate + phosphate + H(+). In terms of biological role, catalyzes the dephosphorylation of undecaprenyl diphosphate (UPP). Confers resistance to bacitracin. The polypeptide is Undecaprenyl-diphosphatase (Acidothermus cellulolyticus (strain ATCC 43068 / DSM 8971 / 11B)).